The chain runs to 392 residues: N-acetylneuraminate epimerase (392 aa).

Residues 1-35 form the signal peptide; it reads MTQIYHQYKKKLSTKVILLSALTLCITFSLPYANA. 7 Kelch repeats span residues 56 to 100, 102 to 155, 157 to 192, 193 to 238, 241 to 290, 312 to 361, and 363 to 392; these read HLYV…VALS, KLYV…TTLN, TQAL…AVVN, AYFD…TAKK, LILI…LAGA, QQFN…QDKD, and VILL…LHLE. Glutamate 247 (proton acceptor) is an active-site residue.

Belongs to the NanM family. In terms of assembly, homodimer.

Its subcellular location is the periplasm. The enzyme catalyses N-acetyl-alpha-neuraminate = N-acetyl-beta-neuraminate. Converts alpha-N-acetylneuranimic acid (Neu5Ac) to the beta-anomer, accelerating the equilibrium between the alpha- and beta-anomers. Probably facilitates sialidase-negative bacteria to compete successfully for limited amounts of extracellular Neu5Ac, which is likely taken up in the beta-anomer. In addition, the rapid removal of sialic acid from solution might be advantageous to the bacterium to damp down host responses. The sequence is that of N-acetylneuraminate epimerase from Yersinia enterocolitica serotype O:8 / biotype 1B (strain NCTC 13174 / 8081).